The following is a 469-amino-acid chain: Probable Xaa-Pro aminopeptidase PEPP (469 aa).

The Mn(2+) site is built by Asp264, Asp275, Glu398, and Glu438.

It belongs to the peptidase M24B family. Requires Mn(2+) as cofactor.

It catalyses the reaction Release of any N-terminal amino acid, including proline, that is linked to proline, even from a dipeptide or tripeptide.. In terms of biological role, catalyzes the removal of a penultimate prolyl residue from the N-termini of peptides. The sequence is that of Probable Xaa-Pro aminopeptidase PEPP (PEPP) from Ajellomyces capsulatus (strain H143) (Darling's disease fungus).